The sequence spans 333 residues: Anthranilate phosphoribosyltransferase (333 aa).

5-phospho-alpha-D-ribose 1-diphosphate contacts are provided by residues Gly-81, 84–85 (GD), Thr-89, 91–94 (NIST), 109–117 (KHGNRSVSS), and Ala-121. Residue Gly-81 coordinates anthranilate. Ser-93 serves as a coordination point for Mg(2+). Asn-112 lines the anthranilate pocket. Position 167 (Arg-167) interacts with anthranilate. Mg(2+)-binding residues include Asp-225 and Glu-226.

The protein belongs to the anthranilate phosphoribosyltransferase family. In terms of assembly, homodimer. Requires Mg(2+) as cofactor.

The catalysed reaction is N-(5-phospho-beta-D-ribosyl)anthranilate + diphosphate = 5-phospho-alpha-D-ribose 1-diphosphate + anthranilate. The protein operates within amino-acid biosynthesis; L-tryptophan biosynthesis; L-tryptophan from chorismate: step 2/5. Catalyzes the transfer of the phosphoribosyl group of 5-phosphorylribose-1-pyrophosphate (PRPP) to anthranilate to yield N-(5'-phosphoribosyl)-anthranilate (PRA). In Haemophilus influenzae (strain PittGG), this protein is Anthranilate phosphoribosyltransferase.